A 43-amino-acid chain; its full sequence is uncharacterized protein (43 aa).

The segment at 13-43 is disordered; that stretch reads QLPRLSRPRQSHLPAQTPQPRLSYPKTRRQI.

This is an uncharacterized protein from Clover yellow mosaic virus (CYMV).